Consider the following 679-residue polypeptide: Protein hook (679 aa).

The 118-residue stretch at 6–123 folds into the Calponin-homology (CH) domain; the sequence is NEMYYSLLEW…RLLQLVLGCA (118 aa). Coiled-coil stretches lie at residues 135–437 and 480–574; these read EIMC…LKCG and QTAL…QEIL.

It belongs to the hook family. In terms of assembly, homodimer. Interacts with microtubules via its N-terminus.

Its subcellular location is the cytoplasm. It localises to the cytoskeleton. The protein resides in the endosome. The protein localises to the synapse. Functionally, involved in endocytic trafficking by stabilizing organelles of the endocytic pathway. Probably acts as a cytoskeletal linker protein required to tether endosome vesicles to the cytoskeleton. Involved in modulation of endocytosis at stages required for down-regulation of membrane proteins that control synapse size. Not involved in synaptic vesicle recycling. Required in R7 cells for boss endocytosis into multivesicular bodies (MVBs). Has a role in regulating adult longevity. The polypeptide is Protein hook (Drosophila simulans (Fruit fly)).